The following is a 122-amino-acid chain: uncharacterized protein (122 aa).

The segment covering 1 to 15 has biased composition (basic and acidic residues); sequence MAEPGGRGDYHKDGR. The disordered stretch occupies residues 1 to 26; that stretch reads MAEPGGRGDYHKDGRPPSLSRSPLFT.

This is an uncharacterized protein from Macaca fascicularis (Crab-eating macaque).